A 380-amino-acid polypeptide reads, in one-letter code: Queuine tRNA-ribosyltransferase (380 aa).

Asp-96 (proton acceptor) is an active-site residue. Substrate contacts are provided by residues 96–100 (DSGGF), Asp-150, Gln-193, and Gly-220. The tract at residues 251–257 (GVGAPDS) is RNA binding. The Nucleophile role is filled by Asp-270. Residues 275-279 (TRIAR) form an RNA binding; important for wobble base 34 recognition region. Residues Cys-308, Cys-310, Cys-313, and His-339 each contribute to the Zn(2+) site.

Belongs to the queuine tRNA-ribosyltransferase family. As to quaternary structure, homodimer. Within each dimer, one monomer is responsible for RNA recognition and catalysis, while the other monomer binds to the replacement base PreQ1. The cofactor is Zn(2+).

The enzyme catalyses 7-aminomethyl-7-carbaguanine + guanosine(34) in tRNA = 7-aminomethyl-7-carbaguanosine(34) in tRNA + guanine. Its pathway is tRNA modification; tRNA-queuosine biosynthesis. Its function is as follows. Catalyzes the base-exchange of a guanine (G) residue with the queuine precursor 7-aminomethyl-7-deazaguanine (PreQ1) at position 34 (anticodon wobble position) in tRNAs with GU(N) anticodons (tRNA-Asp, -Asn, -His and -Tyr). Catalysis occurs through a double-displacement mechanism. The nucleophile active site attacks the C1' of nucleotide 34 to detach the guanine base from the RNA, forming a covalent enzyme-RNA intermediate. The proton acceptor active site deprotonates the incoming PreQ1, allowing a nucleophilic attack on the C1' of the ribose to form the product. After dissociation, two additional enzymatic reactions on the tRNA convert PreQ1 to queuine (Q), resulting in the hypermodified nucleoside queuosine (7-(((4,5-cis-dihydroxy-2-cyclopenten-1-yl)amino)methyl)-7-deazaguanosine). This chain is Queuine tRNA-ribosyltransferase, found in Streptococcus pneumoniae (strain Hungary19A-6).